The sequence spans 89 residues: Glutamyl-tRNA(Gln) amidotransferase subunit C (89 aa).

The protein belongs to the GatC family. In terms of assembly, heterotrimer of A, B and C subunits.

The enzyme catalyses L-glutamyl-tRNA(Gln) + L-glutamine + ATP + H2O = L-glutaminyl-tRNA(Gln) + L-glutamate + ADP + phosphate + H(+). It carries out the reaction L-aspartyl-tRNA(Asn) + L-glutamine + ATP + H2O = L-asparaginyl-tRNA(Asn) + L-glutamate + ADP + phosphate + 2 H(+). Allows the formation of correctly charged Asn-tRNA(Asn) or Gln-tRNA(Gln) through the transamidation of misacylated Asp-tRNA(Asn) or Glu-tRNA(Gln) in organisms which lack either or both of asparaginyl-tRNA or glutaminyl-tRNA synthetases. The reaction takes place in the presence of glutamine and ATP through an activated phospho-Asp-tRNA(Asn) or phospho-Glu-tRNA(Gln). This Thermus thermophilus (strain ATCC 27634 / DSM 579 / HB8) protein is Glutamyl-tRNA(Gln) amidotransferase subunit C.